The chain runs to 168 residues: Lipoprotein signal peptidase (168 aa).

The next 2 membrane-spanning stretches (helical) occupy residues 57 to 77 and 86 to 106; these read PKEV…LYVF and FILP…DRIT. Active-site residues include aspartate 112 and aspartate 138. A helical transmembrane segment spans residues 131–151; sequence WPIFNIADSAITIGACLLILF.

It belongs to the peptidase A8 family.

It is found in the cell inner membrane. The enzyme catalyses Release of signal peptides from bacterial membrane prolipoproteins. Hydrolyzes -Xaa-Yaa-Zaa-|-(S,diacylglyceryl)Cys-, in which Xaa is hydrophobic (preferably Leu), and Yaa (Ala or Ser) and Zaa (Gly or Ala) have small, neutral side chains.. It participates in protein modification; lipoprotein biosynthesis (signal peptide cleavage). In terms of biological role, this protein specifically catalyzes the removal of signal peptides from prolipoproteins. This chain is Lipoprotein signal peptidase, found in Chlorobium phaeobacteroides (strain DSM 266 / SMG 266 / 2430).